A 159-amino-acid polypeptide reads, in one-letter code: Succinate dehydrogenase [ubiquinone] cytochrome b small subunit, mitochondrial (159 aa).

A mitochondrion-targeting transit peptide spans 1–56 (MAVLLKLGVLCSGQGARALLLRSRVVRPAYVSAFLQDQPTQGRCGTQHIHLSPSHH). Topologically, residues 57-63 (SGSKAAS) are mitochondrial matrix. Residues 64–85 (LHWTSERVVSVLLLGLIPAGYL) form a helical membrane-spanning segment. The Mitochondrial intermembrane portion of the chain corresponds to 86–90 (NPCSV). The chain crosses the membrane as a helical span at residues 91–111 (VDYSLAAALTLHSHWGLGQVV). Residue His-102 participates in heme b binding. Residues 112-120 (TDYVHGDTL) lie on the Mitochondrial matrix side of the membrane. Tyr-114 contacts a ubiquinone. A helical membrane pass occupies residues 121 to 142 (PKAARAGLLALSALTFAGLCYF). The Mitochondrial intermembrane segment spans residues 143 to 159 (NYHDVGICRAVAMLWKL).

It belongs to the CybS family. Component of complex II composed of four subunits: the flavoprotein (FP) SDHA, iron-sulfur protein (IP) SDHB, and a cytochrome b560 composed of SDHC and SDHD.

Its subcellular location is the mitochondrion inner membrane. It participates in carbohydrate metabolism; tricarboxylic acid cycle. Membrane-anchoring subunit of succinate dehydrogenase (SDH) that is involved in complex II of the mitochondrial electron transport chain and is responsible for transferring electrons from succinate to ubiquinone (coenzyme Q). SDH also oxidizes malate to the non-canonical enol form of oxaloacetate, enol-oxaloacetate. Enol-oxaloacetate, which is a potent inhibitor of the succinate dehydrogenase activity, is further isomerized into keto-oxaloacetate. This Mus musculus (Mouse) protein is Succinate dehydrogenase [ubiquinone] cytochrome b small subunit, mitochondrial (Sdhd).